The sequence spans 208 residues: Small ribosomal subunit protein uS4 (208 aa).

The 67-residue stretch at 98-164 folds into the S4 RNA-binding domain; that stretch reads SRLDNVVYRM…DRIKFALELA (67 aa).

This sequence belongs to the universal ribosomal protein uS4 family. Part of the 30S ribosomal subunit. Contacts protein S5. The interaction surface between S4 and S5 is involved in control of translational fidelity.

Functionally, one of the primary rRNA binding proteins, it binds directly to 16S rRNA where it nucleates assembly of the body of the 30S subunit. Its function is as follows. With S5 and S12 plays an important role in translational accuracy. The protein is Small ribosomal subunit protein uS4 of Nitrosococcus oceani (strain ATCC 19707 / BCRC 17464 / JCM 30415 / NCIMB 11848 / C-107).